The sequence spans 641 residues: YAP1-binding protein 2 (641 aa).

This sequence belongs to the YBP1 family.

The protein localises to the cytoplasm. Its function is as follows. Involved in oxidative stress response and redox homeostasis. Required for hydrogen peroxide-induced activation of YAP1. Acts in a parallele pathway to YBP1. The polypeptide is YAP1-binding protein 2 (Saccharomyces cerevisiae (strain ATCC 204508 / S288c) (Baker's yeast)).